The following is a 309-amino-acid chain: Probable manganese-dependent inorganic pyrophosphatase (309 aa).

Positions 9, 13, 15, 75, 97, and 149 each coordinate Mn(2+).

It belongs to the PPase class C family. It depends on Mn(2+) as a cofactor.

It localises to the cytoplasm. The enzyme catalyses diphosphate + H2O = 2 phosphate + H(+). This Staphylococcus aureus (strain COL) protein is Probable manganese-dependent inorganic pyrophosphatase.